Consider the following 405-residue polypeptide: Glucan 1,3-beta-glucosidase A (405 aa).

The first 14 residues, 1 to 14 (MLPLLLCIVPYCWS), serve as a signal peptide directing secretion. The active-site Proton donor is Glu-199. 2 cysteine pairs are disulfide-bonded: Cys-280–Cys-405 and Cys-306–Cys-332. The active-site Nucleophile is the Glu-298.

Belongs to the glycosyl hydrolase 5 (cellulase A) family. As to quaternary structure, monomer. Mn(2+) is required as a cofactor.

It localises to the secreted. It catalyses the reaction Successive hydrolysis of beta-D-glucose units from the non-reducing ends of (1-&gt;3)-beta-D-glucans, releasing alpha-glucose.. Functionally, beta-glucanases participate in the metabolism of beta-glucan, the main structural component of the cell wall. It could also function biosynthetically as a transglycosylase. The polypeptide is Glucan 1,3-beta-glucosidase A (exgA) (Aspergillus oryzae (strain ATCC 42149 / RIB 40) (Yellow koji mold)).